Reading from the N-terminus, the 311-residue chain is Triacylglycerol lipase (311 aa).

An N-terminal signal peptide occupies residues 1 to 26; it reads MKKKSLLPLGLAIGLASLAASPLIQA. The region spanning 35-280 is the AB hydrolase-1 domain; sequence PIVLAHGMLG…DNYRMNHLDE (246 aa). Met-42 contacts substrate. Ser-108 acts as the Nucleophile in catalysis. His-109 is a binding site for substrate. An intrachain disulfide couples Cys-209 to Cys-261. Asp-235 lines the Ca(2+) pocket. Residues Asp-255 and His-277 each act as charge relay system in the active site. Positions 279, 283, and 287 each coordinate Ca(2+).

Belongs to the AB hydrolase superfamily. Pseudomonas lipase family. As to quaternary structure, monomer. The cofactor is Ca(2+).

It is found in the secreted. It carries out the reaction a triacylglycerol + H2O = a diacylglycerol + a fatty acid + H(+). Na(+) increases lipase activity. Inhibited by diethyl p-nitrophenyl phosphate and 3,4-dichloroisocoumarin (DCI). Its function is as follows. Catalyzes the hydrolysis of triacylglycerol. It also exhibits some esterase activity with p-nitrophenyl acetate and Tween 80 as substrates, however the lipase activity is approximately eight times the esterase activity. It shows a marked specificity for the 1,3-oleyl residues of triolein. The protein is Triacylglycerol lipase of Pseudomonas aeruginosa (strain ATCC 15692 / DSM 22644 / CIP 104116 / JCM 14847 / LMG 12228 / 1C / PRS 101 / PAO1).